A 301-amino-acid chain; its full sequence is Troponin T, cardiac muscle (301 aa).

Composition is skewed to acidic residues over residues 1–42 (MSDL…EEEA) and 50–74 (AETE…DGPV). Disordered regions lie at residues 1–99 (MSDL…GERV) and 125–223 (ENRK…KKKK). N-acetylserine is present on Ser2. Ser2 is subject to Phosphoserine; by CK2. Over residues 82-93 (RPFMPNLVPPKI) the composition is skewed to pro residues. 2 stretches are compositionally biased toward basic and acidic residues: residues 125 to 186 (ENRK…DEAR) and 206 to 223 (QTER…KKKK). The residue at position 207 (Thr207) is a Phosphothreonine; by PKC/PRKCA. The residue at position 211 (Ser211) is a Phosphoserine; by PKC/PRKCA. A Phosphothreonine; by PKC/PRKCA and RAF1 modification is found at Thr216. At Thr297 the chain carries Phosphothreonine; by PKC/PRKCA.

The protein belongs to the troponin T family. In terms of assembly, binds with troponins I and C to make the thin-filament regulatory complex, troponin. Post-translationally, phosphorylation at Thr-216 by PRKCA induces significant reduction in myofilament calcium sensitivity and actomyosin ATPase activity. The major isoform in adult heart is CTNT4.

Troponin T is the tropomyosin-binding subunit of troponin, the thin filament regulatory complex which confers calcium-sensitivity to striated muscle actomyosin ATPase activity. The sequence is that of Troponin T, cardiac muscle (TNNT2) from Oryctolagus cuniculus (Rabbit).